Here is an 877-residue protein sequence, read N- to C-terminus: Phosphoenolpyruvate carboxylase (877 aa).

Residues H138 and K544 contribute to the active site.

This sequence belongs to the PEPCase type 1 family. The cofactor is Mg(2+).

The catalysed reaction is oxaloacetate + phosphate = phosphoenolpyruvate + hydrogencarbonate. In terms of biological role, forms oxaloacetate, a four-carbon dicarboxylic acid source for the tricarboxylic acid cycle. The polypeptide is Phosphoenolpyruvate carboxylase (Vibrio vulnificus (strain CMCP6)).